A 342-amino-acid polypeptide reads, in one-letter code: Transmembrane protein 115 homolog (342 aa).

The Cytoplasmic portion of the chain corresponds to 1-21 (MQYSSRFLELNIPDSFLNINK). Residues 22–42 (IPDATKFITVTYICLTATLFC) form a helical membrane-spanning segment. Topologically, residues 43–121 (IRRSLYNKLV…NWNSSKEMFK (79 aa)) are lumenal. An N-linked (GlcNAc...) asparagine glycan is attached at Asn-114. A helical membrane pass occupies residues 122 to 142 (FIIVLGSLTNVLIIMLTLLVS). Over 143–159 (FFSNKVRLDIPLDGNYT) the chain is Cytoplasmic. Residues 160–180 (ILIGFPIIYRQLLPETTIIHL) traverse the membrane as a helical segment. At 181 to 207 (KTPQFLAKNFRFKLLPIFVMFTMTVTQ) the chain is on the lumenal side. A helical transmembrane segment spans residues 208–228 (IIWFHHFAQLFSIWVTFFASW). Residues 229–342 (SYLRFFQKLA…QVLEERMVNP (114 aa)) are Cytoplasmic-facing.

The protein belongs to the TMEM115 family. As to quaternary structure, homooligomer.

The protein localises to the golgi apparatus membrane. In terms of biological role, may play a role in retrograde transport of proteins from the Golgi to the endoplasmic reticulum. The chain is Transmembrane protein 115 homolog from Saccharomyces cerevisiae (strain ATCC 204508 / S288c) (Baker's yeast).